We begin with the raw amino-acid sequence, 397 residues long: Protein EMSY-LIKE 3 (397 aa).

The tract at residues 1–40 is disordered; that stretch reads MDYRPSDSSGTDDDLPPSHQGRYQRNARPTGNGRPSVLNS. Residues 50–137 form the ENT domain; that stretch reads METQIHLIEQ…PQLVHDAPSP (88 aa). The stretch at 81-107 forms a coiled coil; it reads ESLITELRKELRVSDEEHRELLSRVNA. Disordered stretches follow at residues 122–221 and 284–330; these read SLQS…SYDP and DPGI…TQNG. The span at 164–174 shows a compositional bias: polar residues; it reads LHPSMQPSSSA. The short motif at 175-182 is the Nuclear localization signal element; that stretch reads LRRGGPPP. A coiled-coil region spans residues 363–389; sequence AEVEKAKRVLRDHELALMDAIAKLEEI. Position 390 is a phosphoserine (serine 390).

The protein localises to the nucleus. In terms of biological role, probably involved in the regulation of chromatin states. Contributes to basal immunity. This Arabidopsis thaliana (Mouse-ear cress) protein is Protein EMSY-LIKE 3.